We begin with the raw amino-acid sequence, 692 residues long: Elongation factor G (692 aa).

The tr-type G domain maps to 8–283 (EDYRNFGIMA…AVVDYLPSPL (276 aa)). GTP contacts are provided by residues 17–24 (AHIDAGKT), 81–85 (DTPGH), and 135–138 (NKMD).

It belongs to the TRAFAC class translation factor GTPase superfamily. Classic translation factor GTPase family. EF-G/EF-2 subfamily.

The protein resides in the cytoplasm. Catalyzes the GTP-dependent ribosomal translocation step during translation elongation. During this step, the ribosome changes from the pre-translocational (PRE) to the post-translocational (POST) state as the newly formed A-site-bound peptidyl-tRNA and P-site-bound deacylated tRNA move to the P and E sites, respectively. Catalyzes the coordinated movement of the two tRNA molecules, the mRNA and conformational changes in the ribosome. In Caulobacter sp. (strain K31), this protein is Elongation factor G.